Reading from the N-terminus, the 397-residue chain is S-adenosylmethionine:tRNA ribosyltransferase-isomerase (397 aa).

It belongs to the QueA family. Monomer.

The protein localises to the cytoplasm. The catalysed reaction is 7-aminomethyl-7-carbaguanosine(34) in tRNA + S-adenosyl-L-methionine = epoxyqueuosine(34) in tRNA + adenine + L-methionine + 2 H(+). It participates in tRNA modification; tRNA-queuosine biosynthesis. Transfers and isomerizes the ribose moiety from AdoMet to the 7-aminomethyl group of 7-deazaguanine (preQ1-tRNA) to give epoxyqueuosine (oQ-tRNA). In Nostoc sp. (strain PCC 7120 / SAG 25.82 / UTEX 2576), this protein is S-adenosylmethionine:tRNA ribosyltransferase-isomerase.